A 216-amino-acid polypeptide reads, in one-letter code: Uracil-DNA glycosylase (216 aa).

D60 serves as the catalytic Proton acceptor.

Belongs to the uracil-DNA glycosylase (UDG) superfamily. UNG family.

It localises to the cytoplasm. The enzyme catalyses Hydrolyzes single-stranded DNA or mismatched double-stranded DNA and polynucleotides, releasing free uracil.. In terms of biological role, excises uracil residues from the DNA which can arise as a result of misincorporation of dUMP residues by DNA polymerase or due to deamination of cytosine. The sequence is that of Uracil-DNA glycosylase from Psychromonas ingrahamii (strain DSM 17664 / CCUG 51855 / 37).